Consider the following 633-residue polypeptide: Pesticidal crystal protein Cry2Aa (633 aa).

This sequence belongs to the delta endotoxin family.

Promotes colloidosmotic lysis by binding to the midgut epithelial cells of both dipteran (Aedes aegypti) and lepidopteran (Manduca sexta) larvae. This is Pesticidal crystal protein Cry2Aa (cry2Aa) from Bacillus thuringiensis subsp. kenyae.